Reading from the N-terminus, the 291-residue chain is Acetylglutamate kinase (291 aa).

Residues Gly-64 to Gly-65, Arg-86, and Asn-190 each bind substrate.

This sequence belongs to the acetylglutamate kinase family. ArgB subfamily.

Its subcellular location is the cytoplasm. The enzyme catalyses N-acetyl-L-glutamate + ATP = N-acetyl-L-glutamyl 5-phosphate + ADP. The protein operates within amino-acid biosynthesis; L-arginine biosynthesis; N(2)-acetyl-L-ornithine from L-glutamate: step 2/4. In terms of biological role, catalyzes the ATP-dependent phosphorylation of N-acetyl-L-glutamate. The sequence is that of Acetylglutamate kinase from Leptospira borgpetersenii serovar Hardjo-bovis (strain L550).